The chain runs to 127 residues: Phospholipase A2 homolog otoconin-22 (127 aa).

An N-linked (GlcNAc...) asparagine glycan is attached at Asn-20. 7 disulfide bridges follow: Cys-26/Cys-120, Cys-28/Cys-44, Cys-43/Cys-99, Cys-49/Cys-127, Cys-50/Cys-92, Cys-59/Cys-85, and Cys-78/Cys-90. An N-linked (GlcNAc...) asparagine glycan is attached at Asn-113.

It belongs to the phospholipase A2 family. In terms of assembly, monomer. In terms of tissue distribution, otoconial membrane in the maculae of the saccule and utricle. Otoconia are composites of proteins and inorganic crystals formed in the peripheral portion of the vestibular system of vertebrates. The otoconial membranes contain small crystals of calcium carbonate known as otoliths (ear stones) if there is a single deposit or as otoconia (ear dust) if there are many. Each mineral polymorph of otoconia has a protein unique to that polymorph.

It localises to the secreted. In terms of biological role, major protein of the aragonitic otoconia. It is unlikely that this protein has phospholipase A2 activity. The protein is Phospholipase A2 homolog otoconin-22 of Xenopus laevis (African clawed frog).